Consider the following 349-residue polypeptide: Peroxidase 23 (349 aa).

The N-terminal stretch at 1 to 29 (MGFSSSLSCSAMGALIVGCLLLQASNSNA) is a signal peptide. Gln30 is modified (pyrrolidone carboxylic acid). 4 cysteine pairs are disulfide-bonded: Cys40-Cys120, Cys73-Cys78, Cys126-Cys329, and Cys206-Cys238. Residue His71 is the Proton acceptor of the active site. Residues Asp72, Val75, Gly77, Asp79, and Ser81 each contribute to the Ca(2+) site. Asn86 carries N-linked (GlcNAc...) asparagine glycosylation. Pro168 serves as a coordination point for substrate. Position 199 (His199) interacts with heme b. A Ca(2+)-binding site is contributed by Thr200. Asn217 and Asn243 each carry an N-linked (GlcNAc...) asparagine glycan. Positions 251, 254, and 259 each coordinate Ca(2+).

This sequence belongs to the peroxidase family. Classical plant (class III) peroxidase subfamily. Heme b serves as cofactor. Ca(2+) is required as a cofactor.

The protein resides in the secreted. It localises to the vacuole. The catalysed reaction is 2 a phenolic donor + H2O2 = 2 a phenolic radical donor + 2 H2O. In terms of biological role, removal of H(2)O(2), oxidation of toxic reductants, biosynthesis and degradation of lignin, suberization, auxin catabolism, response to environmental stresses such as wounding, pathogen attack and oxidative stress. These functions might be dependent on each isozyme/isoform in each plant tissue. The sequence is that of Peroxidase 23 (PER23) from Arabidopsis thaliana (Mouse-ear cress).